Here is a 39-residue protein sequence, read N- to C-terminus: Photosystem II reaction center protein Psb30 (39 aa).

The chain crosses the membrane as a helical span at residues 12–32 (IFQLTFVGLIMVAGPVVIFLL).

Belongs to the Psb30/Ycf12 family. PSII is composed of 1 copy each of membrane proteins PsbA, PsbB, PsbC, PsbD, PsbE, PsbF, PsbH, PsbI, PsbJ, PsbK, PsbL, PsbM, PsbT, PsbX, PsbY, PsbZ, Psb30/Ycf12, peripheral proteins PsbO, CyanoQ (PsbQ), PsbU, PsbV and a large number of cofactors. It forms dimeric complexes.

The protein resides in the cellular thylakoid membrane. A core subunit of photosystem II (PSII), probably helps stabilize the reaction center. This is Photosystem II reaction center protein Psb30 from Rippkaea orientalis (strain PCC 8801 / RF-1) (Cyanothece sp. (strain PCC 8801)).